The following is a 579-amino-acid chain: Probable methyl-accepting chemotaxis protein BT9727_0355 (579 aa).

Topologically, residues 1 to 13 are cytoplasmic; that stretch reads MKKYWHKLSFLQK. Residues 14 to 34 form a helical membrane-spanning segment; sequence NVLLTVLVILTLVGTMGALSF. The Extracellular segment spans residues 35-198; the sequence is NMFQNSMMSI…ASIVPSTKEK (164 aa). The chain crosses the membrane as a helical span at residues 199-219; sequence FIIQGLMFICISVLIATVIQF. Residues 220-579 lie on the Cytoplasmic side of the membrane; the sequence is LIVRNALAPL…LQELIGEFKS (360 aa). One can recognise an HAMP domain in the interval 223-274; it reads RNALAPLRDLREGLRRVGEGDLNIKLEERSDDIGIINSYFNNTIEKFKGIID. Glu289 is modified (glutamate methyl ester (Glu)). The Methyl-accepting transducer domain maps to 293–529; sequence STKENSMAVQ…NIVRVVNELS (237 aa). A Glutamate methyl ester (Glu) modification is found at Glu548.

Belongs to the methyl-accepting chemotaxis (MCP) protein family.

Its subcellular location is the cell membrane. Its function is as follows. Chemotactic-signal transducers respond to changes in the concentration of attractants and repellents in the environment, transduce a signal from the outside to the inside of the cell, and facilitate sensory adaptation through the variation of the level of methylation. The protein is Probable methyl-accepting chemotaxis protein BT9727_0355 of Bacillus thuringiensis subsp. konkukian (strain 97-27).